A 474-amino-acid chain; its full sequence is Ribosomal protein uS12 methylthiotransferase RimO (474 aa).

Residues 37–147 (NRIGFVSLGC…VLNHVHKYVP (111 aa)) enclose the MTTase N-terminal domain. [4Fe-4S] cluster-binding residues include C46, C82, C111, C179, C183, and C186. In terms of domain architecture, Radical SAM core spans 165–402 (LTPKHYAYLK…MEVQAEISAE (238 aa)). Residues 405–471 (ARLVGRELDI…EHDLWAELVA (67 aa)) enclose the TRAM domain.

Belongs to the methylthiotransferase family. RimO subfamily. Requires [4Fe-4S] cluster as cofactor.

Its subcellular location is the cytoplasm. The catalysed reaction is L-aspartate(89)-[ribosomal protein uS12]-hydrogen + (sulfur carrier)-SH + AH2 + 2 S-adenosyl-L-methionine = 3-methylsulfanyl-L-aspartate(89)-[ribosomal protein uS12]-hydrogen + (sulfur carrier)-H + 5'-deoxyadenosine + L-methionine + A + S-adenosyl-L-homocysteine + 2 H(+). In terms of biological role, catalyzes the methylthiolation of an aspartic acid residue of ribosomal protein uS12. This chain is Ribosomal protein uS12 methylthiotransferase RimO, found in Shewanella amazonensis (strain ATCC BAA-1098 / SB2B).